Consider the following 544-residue polypeptide: MAKHIIFDSEARAKLKSGVDTMANAVKVTLGPKGRNVVIDKKYGAPSITKDGISVAKEIELKDPVENLGAQLIKEVASKTADGAGDGTTTATVLAQSIFSAGIKNVAAGANPMDLKRGVDKAIEAVVERLKQNSRKISNSKEIEQVATISANNDSKIGKMIADAMDKVGKDGVITVEEAKGTETEVKVVEGMEFDRGYLSPYFVTNTEKMEAELGNAYILICDKKISVMKELLPILEAISQTGRPLLIIAEDIEGEALATLVVNKIRGALKVAAVKAPGFGDRRKAMLEDIAILTGGTVISEERGYKLENATLDYLGTAEKINIDKENTLIVNGGGKKEDIQARISQIRSQIENTTSDYDKEKLQERLAKLSGGVAILYIGAATEVEMKEKKDRVDDALHATRAAVQEGVVAGGGVALIRTIPALENIEVENEDQATGINIVRTSLEAPLRTIVSNAGGEGAVIVQKIREAQGDFGYNARTGNFENLYEAGVIDPTKVTRLALENAASIASLLLTTECVIADEKEEDKPGVGAPGMGGGMGGMM.

ATP contacts are provided by residues 29-32, K50, 86-90, G414, and D494; these read TLGP and DGTTT.

This sequence belongs to the chaperonin (HSP60) family. In terms of assembly, forms a cylinder of 14 subunits composed of two heptameric rings stacked back-to-back. Interacts with the co-chaperonin GroES.

The protein resides in the cytoplasm. It carries out the reaction ATP + H2O + a folded polypeptide = ADP + phosphate + an unfolded polypeptide.. Together with its co-chaperonin GroES, plays an essential role in assisting protein folding. The GroEL-GroES system forms a nano-cage that allows encapsulation of the non-native substrate proteins and provides a physical environment optimized to promote and accelerate protein folding. The chain is Chaperonin GroEL from Amoebophilus asiaticus (strain 5a2).